A 72-amino-acid chain; its full sequence is Conotoxin VnMKLT2-0221 (72 aa).

An N-terminal signal peptide occupies residues 1 to 22 (MKLTCVLIVAVLFLTACQLTTA). The propeptide occupies 23-45 (ASYARSERQHPDLGSSDQNSKLT). A disordered region spans residues 26 to 45 (ARSERQHPDLGSSDQNSKLT). Intrachain disulfides connect Cys-48–Cys-62, Cys-55–Cys-66, and Cys-61–Cys-71.

Belongs to the conotoxin O1 superfamily. Expressed by the venom duct.

It is found in the secreted. In Conus ventricosus (Mediterranean cone), this protein is Conotoxin VnMKLT2-0221.